Consider the following 268-residue polypeptide: 2,5-diamino-6-ribosylamino-4(3H)-pyrimidinone 5'-phosphate reductase (268 aa).

NADP(+) is bound by residues Thr-68, Asp-72, 103–106, and 191–195; these read SNLR and GAELL.

This sequence belongs to the HTP reductase family. As to quaternary structure, homodimer.

It catalyses the reaction 2,5-diamino-6-(1-D-ribitylamino)pyrimidin-4(3H)-one 5'-phosphate + NADP(+) = 2,5-diamino-6-(1-D-ribosylamino)pyrimidin-4(3H)-one 5'-phosphate + NADPH + H(+). It carries out the reaction 2,5-diamino-6-(1-D-ribitylamino)pyrimidin-4(3H)-one 5'-phosphate + NAD(+) = 2,5-diamino-6-(1-D-ribosylamino)pyrimidin-4(3H)-one 5'-phosphate + NADH + H(+). It functions in the pathway cofactor biosynthesis; riboflavin biosynthesis. In terms of biological role, catalyzes an early step in riboflavin biosynthesis, the NADPH-dependent reduction of the ribose side chain of 2,5-diamino-6-ribosylamino-4(3H)-pyrimidinone 5'-phosphate, yielding 2,5-diamino-6-ribitylamino-4(3H)-pyrimidinone 5'-phosphate. In Schizosaccharomyces pombe (strain 972 / ATCC 24843) (Fission yeast), this protein is 2,5-diamino-6-ribosylamino-4(3H)-pyrimidinone 5'-phosphate reductase.